Reading from the N-terminus, the 263-residue chain is Endonuclease 8 (263 aa).

Pro-2 functions as the Schiff-base intermediate with DNA in the catalytic mechanism. The active-site Proton donor is Glu-3. The active-site Proton donor; for beta-elimination activity is Lys-53. Residues Gln-70, Arg-125, and Asn-169 each contribute to the DNA site. Residues 229 to 263 (KVFHRDGELCERCGGIIEKTTLSSRPFYWCPGCQH) form an FPG-type zinc finger. Arg-253 acts as the Proton donor; for delta-elimination activity in catalysis.

This sequence belongs to the FPG family. It depends on Zn(2+) as a cofactor.

It carries out the reaction 2'-deoxyribonucleotide-(2'-deoxyribose 5'-phosphate)-2'-deoxyribonucleotide-DNA = a 3'-end 2'-deoxyribonucleotide-(2,3-dehydro-2,3-deoxyribose 5'-phosphate)-DNA + a 5'-end 5'-phospho-2'-deoxyribonucleoside-DNA + H(+). Functionally, involved in base excision repair of DNA damaged by oxidation or by mutagenic agents. Acts as a DNA glycosylase that recognizes and removes damaged bases. Has a preference for oxidized pyrimidines, such as thymine glycol, 5,6-dihydrouracil and 5,6-dihydrothymine. Has AP (apurinic/apyrimidinic) lyase activity and introduces nicks in the DNA strand. Cleaves the DNA backbone by beta-delta elimination to generate a single-strand break at the site of the removed base with both 3'- and 5'-phosphates. This Escherichia coli O7:K1 (strain IAI39 / ExPEC) protein is Endonuclease 8.